Here is a 122-residue protein sequence, read N- to C-terminus: uncharacterized protein (122 aa).

The protein localises to the mitochondrion. This is an uncharacterized protein from Arabidopsis thaliana (Mouse-ear cress).